Reading from the N-terminus, the 89-residue chain is Acylphosphatase (89 aa).

Residues 3 to 89 (HIHLQVFGRV…NQKLSDFRSI (87 aa)) enclose the Acylphosphatase-like domain. Residues arginine 18 and asparagine 36 contribute to the active site.

This sequence belongs to the acylphosphatase family.

The catalysed reaction is an acyl phosphate + H2O = a carboxylate + phosphate + H(+). This is Acylphosphatase (acyP) from Staphylococcus aureus (strain Mu3 / ATCC 700698).